We begin with the raw amino-acid sequence, 23 residues long: U3-ctenitoxin-Co1a (23 aa).

2 cysteine pairs are disulfide-bonded: C2–C17 and C9–C22.

In terms of tissue distribution, expressed by the venom gland.

It localises to the secreted. Its function is as follows. Antagonist of L-type calcium channels (Cav1/CACNA1). The protein is U3-ctenitoxin-Co1a of Ctenus ornatus (Brazilian spider).